A 257-amino-acid polypeptide reads, in one-letter code: Transmembrane protein 101 (257 aa).

The next 8 membrane-spanning stretches (helical) occupy residues 24–40, 52–72, 77–97, 110–130, 139–159, 182–202, 206–226, and 233–253; these read TRCP…LYAE, VPYL…MSFG, WFAL…YIGG, YSRT…AGEL, SLQS…AYSL, LFFV…YVTL, ILAV…SYWH, and FWNQ…AVIL.

The protein resides in the membrane. May activate NF-kappa-B signaling pathways. This is Transmembrane protein 101 (Tmem101) from Mus musculus (Mouse).